The primary structure comprises 412 residues: 1-deoxy-D-xylulose 5-phosphate reductoisomerase (412 aa).

8 residues coordinate NADPH: Thr-10, Gly-11, Ser-12, Ile-13, Gly-36, Lys-37, Asn-38, and Asn-130. Lys-131 is a 1-deoxy-D-xylulose 5-phosphate binding site. Residue Glu-132 coordinates NADPH. A Mn(2+)-binding site is contributed by Asp-156. Residues Ser-157, Glu-158, Ser-194, and His-217 each coordinate 1-deoxy-D-xylulose 5-phosphate. Glu-158 serves as a coordination point for Mn(2+). Gly-223 contributes to the NADPH binding site. Residues Ser-230, Asn-235, Lys-236, and Glu-239 each coordinate 1-deoxy-D-xylulose 5-phosphate. Glu-239 is a Mn(2+) binding site.

It belongs to the DXR family. Mg(2+) is required as a cofactor. The cofactor is Mn(2+).

The catalysed reaction is 2-C-methyl-D-erythritol 4-phosphate + NADP(+) = 1-deoxy-D-xylulose 5-phosphate + NADPH + H(+). It functions in the pathway isoprenoid biosynthesis; isopentenyl diphosphate biosynthesis via DXP pathway; isopentenyl diphosphate from 1-deoxy-D-xylulose 5-phosphate: step 1/6. In terms of biological role, catalyzes the NADPH-dependent rearrangement and reduction of 1-deoxy-D-xylulose-5-phosphate (DXP) to 2-C-methyl-D-erythritol 4-phosphate (MEP). This chain is 1-deoxy-D-xylulose 5-phosphate reductoisomerase, found in Prochlorococcus marinus (strain NATL1A).